The following is a 359-amino-acid chain: Peptide chain release factor 1 (359 aa).

Q236 bears the N5-methylglutamine mark.

Belongs to the prokaryotic/mitochondrial release factor family. Post-translationally, methylated by PrmC. Methylation increases the termination efficiency of RF1.

The protein localises to the cytoplasm. Its function is as follows. Peptide chain release factor 1 directs the termination of translation in response to the peptide chain termination codons UAG and UAA. In Streptococcus pyogenes serotype M18 (strain MGAS8232), this protein is Peptide chain release factor 1.